Here is a 234-residue protein sequence, read N- to C-terminus: Large ribosomal subunit protein uL1 (234 aa).

This sequence belongs to the universal ribosomal protein uL1 family. In terms of assembly, part of the 50S ribosomal subunit.

Binds directly to 23S rRNA. The L1 stalk is quite mobile in the ribosome, and is involved in E site tRNA release. In terms of biological role, protein L1 is also a translational repressor protein, it controls the translation of the L11 operon by binding to its mRNA. In Desulfatibacillum aliphaticivorans, this protein is Large ribosomal subunit protein uL1.